We begin with the raw amino-acid sequence, 136 residues long: Histone H3.3C (136 aa).

The span at 1-10 shows a compositional bias: polar residues; the sequence is MALTKQTARK. Residues 1-44 are disordered; sequence MALTKQTARKSTGGKAPRKQLATKATRKSAPSTGGVKKPHRYRP. Position 4 is a phosphothreonine; by HASPIN (Thr4). An Allysine; alternate modification is found at Lys5. Lys5 carries the post-translational modification N6,N6,N6-trimethyllysine; alternate. An N6,N6-dimethyllysine; alternate modification is found at Lys5. Lys5 is modified (N6-(2-hydroxyisobutyryl)lysine; alternate). N6-(beta-hydroxybutyryl)lysine; alternate is present on Lys5. Residue Lys5 is modified to N6-acetyllysine; alternate. The residue at position 5 (Lys5) is an N6-methyllysine; alternate. At Gln6 the chain carries 5-glutamyl dopamine; alternate. Gln6 carries the post-translational modification 5-glutamyl serotonin; alternate. Residue Thr7 is modified to Phosphothreonine; by PKC. Arg9 is modified (citrulline; alternate). A Symmetric dimethylarginine; by PRMT5; alternate modification is found at Arg9. Lys10 is modified (N6,N6,N6-trimethyllysine; alternate). Lys10 is subject to N6,N6-dimethyllysine; alternate. At Lys10 the chain carries N6-(2-hydroxyisobutyryl)lysine; alternate. At Lys10 the chain carries N6-(beta-hydroxybutyryl)lysine; alternate. Lys10 carries the post-translational modification N6-acetyllysine; alternate. Lys10 is modified (N6-methyllysine; alternate). Lys10 bears the N6-lactoyllysine; alternate mark. An ADP-ribosylserine; alternate modification is found at Ser11. Ser11 carries the phosphoserine; alternate; by AURKB, AURKC, RPS6KA3, RPS6KA4 and RPS6KA5 modification. Position 12 is a phosphothreonine; by PKC (Thr12). The residue at position 15 (Lys15) is an N6-(2-hydroxyisobutyryl)lysine; alternate. Lys15 bears the N6-(beta-hydroxybutyryl)lysine; alternate mark. Lys15 is subject to N6-acetyllysine; alternate. Lys15 carries the post-translational modification N6-lactoyllysine; alternate. Lys15 carries the post-translational modification N6-glutaryllysine; alternate. Lys15 is modified (N6-succinyllysine; alternate). Arg18 is modified (citrulline; alternate). Residue Arg18 is modified to Asymmetric dimethylarginine; by CARM1; alternate. Lys19 and Lys24 each carry N6-(2-hydroxyisobutyryl)lysine; alternate. 2 positions are modified to N6-(beta-hydroxybutyryl)lysine; alternate: Lys19 and Lys24. 2 positions are modified to N6-acetyllysine; alternate: Lys19 and Lys24. 2 positions are modified to N6-methyllysine; alternate: Lys19 and Lys24. Lys19 and Lys24 each carry N6-lactoyllysine; alternate. N6-glutaryllysine; alternate is present on residues Lys19 and Lys24. Lys19 and Lys24 each carry N6-butyryllysine; alternate. The residue at position 27 (Arg27) is a Citrulline. Lys28 carries the post-translational modification N6,N6,N6-trimethyllysine; alternate. N6,N6-dimethyllysine; alternate is present on Lys28. Lys28 is modified (N6-(2-hydroxyisobutyryl)lysine; alternate). The residue at position 28 (Lys28) is an N6-acetyllysine; alternate. Lys28 carries the post-translational modification N6-methyllysine; alternate. Position 28 is an N6-lactoyllysine; alternate (Lys28). At Lys28 the chain carries N6-glutaryllysine; alternate. Position 29 is an ADP-ribosylserine; alternate (Ser29). At Ser29 the chain carries Phosphoserine; alternate; by AURKB, AURKC and RPS6KA5. A Phosphoserine modification is found at Ser32. Lys37 carries the post-translational modification N6,N6,N6-trimethyllysine; alternate. N6,N6-dimethyllysine; alternate is present on Lys37. An N6-(2-hydroxyisobutyryl)lysine; alternate modification is found at Lys37. N6-acetyllysine; alternate is present on Lys37. An N6-methyllysine; alternate modification is found at Lys37. Lys38 carries the N6-methyllysine modification. A Phosphotyrosine modification is found at Tyr42. The residue at position 57 (Lys57) is an N6,N6,N6-trimethyllysine; alternate. Lys57 is modified (N6-(2-hydroxyisobutyryl)lysine; alternate). Lys57 carries the post-translational modification N6-(beta-hydroxybutyryl)lysine; alternate. At Lys57 the chain carries N6-acetyllysine; alternate. Lys57 carries the N6-lactoyllysine; alternate modification. The residue at position 57 (Lys57) is an N6-glutaryllysine; alternate. The residue at position 57 (Lys57) is an N6-succinyllysine; alternate. An N6-methyllysine; by EHMT2; alternate modification is found at Lys57. Ser58 bears the Phosphoserine mark. N6-(2-hydroxyisobutyryl)lysine; alternate occurs at positions 65 and 80. An N6-methyllysine; alternate mark is found at Lys65 and Lys80. Lys80 carries the N6,N6,N6-trimethyllysine; alternate modification. Lys80 carries the post-translational modification N6,N6-dimethyllysine; alternate. Residue Lys80 is modified to N6-acetyllysine; alternate. N6-lactoyllysine; alternate is present on Lys80. Lys80 bears the N6-glutaryllysine; alternate mark. Lys80 is subject to N6-succinyllysine; alternate. A Phosphothreonine modification is found at Thr81. Ser87 is subject to Phosphoserine. Thr108 is modified (phosphothreonine). N6-acetyllysine; alternate is present on residues Lys116 and Lys123. N6-glutaryllysine; alternate is present on residues Lys116 and Lys123. Lys123 is subject to N6-(2-hydroxyisobutyryl)lysine; alternate. N6-methyllysine; alternate is present on Lys123. Residue Lys123 is modified to N6-succinyllysine; alternate.

The protein belongs to the histone H3 family. As to quaternary structure, the nucleosome is a histone octamer containing two molecules each of H2A, H2B, H3 and H4 assembled in one H3-H4 heterotetramer and two H2A-H2B heterodimers. The octamer wraps approximately 147 bp of DNA. Post-translationally, acetylation is generally linked to gene activation. Acetylation on Lys-10 (H3K9ac) impairs methylation at Arg-9 (H3R8me2s). Acetylation on Lys-19 (H3K18ac) and Lys-24 (H3K24ac) favors methylation at Arg-18 (H3R17me). Acetylation at Lys-123 (H3K122ac) by EP300/p300 plays a central role in chromatin structure: localizes at the surface of the histone octamer and stimulates transcription, possibly by promoting nucleosome instability. Citrullination at Arg-9 (H3R8ci) and/or Arg-18 (H3R17ci) by PADI4 impairs methylation and represses transcription. In terms of processing, butyrylation of histones marks active promoters and competes with histone acetylation. It is present during late spermatogenesis. Post-translationally, asymmetric dimethylation at Arg-18 (H3R17me2a) by CARM1 is linked to gene activation. Symmetric dimethylation at Arg-9 (H3R8me2s) by PRMT5 is linked to gene repression. Methylation at Lys-5 (H3K4me), Lys-37 and Lys-80 are linked to gene activation. Methylation at Lys-5 (H3K4me) facilitates subsequent acetylation of H3 and H4. Methylation at Lys-80 is associated with DNA double-strand break (DSB) responses and is a specific target for TP53BP1. Methylation at Lys-10 (H3K9me) and Lys-28 (H3K27me) are linked to gene repression. Methylation at Lys-10 (H3K9me) is a specific target for HP1 proteins (CBX1, CBX3 and CBX5) and prevents subsequent phosphorylation at Ser-11 (H3S10ph) and acetylation of H3 and H4. Methylation at Lys-5 (H3K4me) and Lys-80 require preliminary monoubiquitination of H2B at 'Lys-120'. Methylation at Lys-10 (H3K9me) and Lys-28 (H3K27me) are enriched in inactive X chromosome chromatin. Monomethylation at Lys-57 (H3K56me1) by EHMT2/G9A in G1 phase promotes interaction with PCNA and is required for DNA replication. In terms of processing, phosphorylated at Thr-4 (H3T3ph) by HASPIN during prophase and dephosphorylated during anaphase. Phosphorylation at Ser-11 (H3S10ph) by AURKB is crucial for chromosome condensation and cell-cycle progression during mitosis and meiosis. In addition phosphorylation at Ser-11 (H3S10ph) by RPS6KA4 and RPS6KA5 is important during interphase because it enables the transcription of genes following external stimulation, like mitogens, stress, growth factors or UV irradiation and result in the activation of genes, such as c-fos and c-jun. Phosphorylation at Ser-11 (H3S10ph), which is linked to gene activation, prevents methylation at Lys-10 (H3K9me) but facilitates acetylation of H3 and H4. Phosphorylation at Ser-11 (H3S10ph) by AURKB mediates the dissociation of HP1 proteins (CBX1, CBX3 and CBX5) from heterochromatin. Phosphorylation at Ser-11 (H3S10ph) is also an essential regulatory mechanism for neoplastic cell transformation. Phosphorylated at Ser-29 (H3S28ph) by MAP3K20 isoform 1, RPS6KA5 or AURKB during mitosis or upon ultraviolet B irradiation. Phosphorylation at Thr-7 (H3T6ph) by PRKCB is a specific tag for epigenetic transcriptional activation that prevents demethylation of Lys-5 (H3K4me) by LSD1/KDM1A. At centromeres, specifically phosphorylated at Thr-12 (H3T11ph) from prophase to early anaphase, by DAPK3 and PKN1. Phosphorylation at Thr-12 (H3T11ph) by PKN1 or isoform M2 of PKM (PKM2) is a specific tag for epigenetic transcriptional activation that promotes demethylation of Lys-10 (H3K9me) by KDM4C/JMJD2C. Phosphorylation at Tyr-42 (H3Y41ph) by JAK2 promotes exclusion of CBX5 (HP1 alpha) from chromatin. Post-translationally, lysine deamination at Lys-5 (H3K4all) to form allysine is mediated by LOXL2. Allysine formation by LOXL2 only takes place on H3K4me3 and results in gene repression. Succinylation at Lys-80 (H3K79succ) by KAT2A takes place with a maximum frequency around the transcription start sites of genes. It gives a specific tag for epigenetic transcription activation. Desuccinylation at Lys-123 (H3K122succ) by SIRT7 in response to DNA damage promotes chromatin condensation and double-strand breaks (DSBs) repair. In terms of processing, serine ADP-ribosylation constitutes the primary form of ADP-ribosylation of proteins in response to DNA damage. Serine ADP-ribosylation at Ser-11 (H3S10ADPr) is mutually exclusive with phosphorylation at Ser-11 (H3S10ph) and impairs acetylation at Lys-10 (H3K9ac).

It is found in the nucleus. The protein localises to the chromosome. Its function is as follows. Core component of nucleosome. Nucleosomes wrap and compact DNA into chromatin, limiting DNA accessibility to the cellular machineries which require DNA as a template. Histones thereby play a central role in transcription regulation, DNA repair, DNA replication and chromosomal stability. DNA accessibility is regulated via a complex set of post-translational modifications of histones, also called histone code, and nucleosome remodeling. This is Histone H3.3C from Mus musculus (Mouse).